The following is a 289-amino-acid chain: Phosphatidylglycerol--prolipoprotein diacylglyceryl transferase (289 aa).

Helical transmembrane passes span 18–38 (FTIYWYGVLIGLGVIIGYVMA), 54–74 (DFVMYVIPVAIIFARLYYVIF), 86–106 (VFYIWEGGLAIHGALIGGVLT), and 116–136 (LSFWQLMDVAAPSILIGQAIG). A 1,2-diacyl-sn-glycero-3-phospho-(1'-sn-glycerol) is bound at residue Arg-137. Transmembrane regions (helical) follow at residues 177–197 (HPTFLYESIWNFIGVVVLLLL), 205–225 (GELFFSYLIWYSIGRFFIEGM), and 236–256 (LRTAQIVSILLIVGALLLWWY).

The protein belongs to the Lgt family.

It is found in the cell membrane. It catalyses the reaction L-cysteinyl-[prolipoprotein] + a 1,2-diacyl-sn-glycero-3-phospho-(1'-sn-glycerol) = an S-1,2-diacyl-sn-glyceryl-L-cysteinyl-[prolipoprotein] + sn-glycerol 1-phosphate + H(+). Its pathway is protein modification; lipoprotein biosynthesis (diacylglyceryl transfer). Functionally, catalyzes the transfer of the diacylglyceryl group from phosphatidylglycerol to the sulfhydryl group of the N-terminal cysteine of a prolipoprotein, the first step in the formation of mature lipoproteins. The protein is Phosphatidylglycerol--prolipoprotein diacylglyceryl transferase of Halalkalibacterium halodurans (strain ATCC BAA-125 / DSM 18197 / FERM 7344 / JCM 9153 / C-125) (Bacillus halodurans).